The sequence spans 351 residues: Lipoyl synthase, mitochondrial (351 aa).

Residues Cys-84, Cys-89, Cys-95, Cys-115, Cys-119, Cys-122, and Ser-330 each contribute to the [4Fe-4S] cluster site. Residues 100–319 (DKSKATATIM…QKRAMDMGFL (220 aa)) form the Radical SAM core domain.

It belongs to the radical SAM superfamily. Lipoyl synthase family. The cofactor is [4Fe-4S] cluster.

It is found in the mitochondrion. The enzyme catalyses [[Fe-S] cluster scaffold protein carrying a second [4Fe-4S](2+) cluster] + N(6)-octanoyl-L-lysyl-[protein] + 2 oxidized [2Fe-2S]-[ferredoxin] + 2 S-adenosyl-L-methionine + 4 H(+) = [[Fe-S] cluster scaffold protein] + N(6)-[(R)-dihydrolipoyl]-L-lysyl-[protein] + 4 Fe(3+) + 2 hydrogen sulfide + 2 5'-deoxyadenosine + 2 L-methionine + 2 reduced [2Fe-2S]-[ferredoxin]. Its pathway is protein modification; protein lipoylation via endogenous pathway; protein N(6)-(lipoyl)lysine from octanoyl-[acyl-carrier-protein]: step 2/2. Its function is as follows. Catalyzes the radical-mediated insertion of two sulfur atoms into the C-6 and C-8 positions of the octanoyl moiety bound to the lipoyl domains of lipoate-dependent enzymes, thereby converting the octanoylated domains into lipoylated derivatives. In Yarrowia lipolytica (strain CLIB 122 / E 150) (Yeast), this protein is Lipoyl synthase, mitochondrial.